A 300-amino-acid polypeptide reads, in one-letter code: Ribosomal protein bS6--L-glutamate ligase (300 aa).

The 184-residue stretch at 104–287 folds into the ATP-grasp domain; it reads LQLLARQGID…IAGRMIQWIE (184 aa). ATP contacts are provided by residues Lys141, 178–179, Asp187, and 211–213; these read EY and RSN. Positions 248, 260, and 262 each coordinate Mg(2+). 3 residues coordinate Mn(2+): Asp248, Glu260, and Asn262.

Belongs to the RimK family. Mg(2+) is required as a cofactor. Requires Mn(2+) as cofactor.

An L-glutamate ligase that catalyzes the ATP-dependent post-translational addition of glutamate residues to the C-terminus of ribosomal protein bS6 (RpsF). Is also able to catalyze the synthesis of poly-alpha-glutamate in vitro, via ATP hydrolysis from unprotected glutamate as substrate. The number of glutamate residues added to either RpsF or to poly-alpha-glutamate changes with pH. The sequence is that of Ribosomal protein bS6--L-glutamate ligase from Salmonella agona (strain SL483).